The primary structure comprises 347 residues: 4-hydroxythreonine-4-phosphate dehydrogenase (347 aa).

Histidine 137 and threonine 138 together coordinate substrate. A divalent metal cation-binding residues include histidine 174, histidine 219, and histidine 274. Substrate contacts are provided by lysine 282, asparagine 291, and arginine 300.

The protein belongs to the PdxA family. As to quaternary structure, homodimer. Requires Zn(2+) as cofactor. It depends on Mg(2+) as a cofactor. Co(2+) serves as cofactor.

It is found in the cytoplasm. It carries out the reaction 4-(phosphooxy)-L-threonine + NAD(+) = 3-amino-2-oxopropyl phosphate + CO2 + NADH. The protein operates within cofactor biosynthesis; pyridoxine 5'-phosphate biosynthesis; pyridoxine 5'-phosphate from D-erythrose 4-phosphate: step 4/5. Catalyzes the NAD(P)-dependent oxidation of 4-(phosphooxy)-L-threonine (HTP) into 2-amino-3-oxo-4-(phosphooxy)butyric acid which spontaneously decarboxylates to form 3-amino-2-oxopropyl phosphate (AHAP). This Cupriavidus pinatubonensis (strain JMP 134 / LMG 1197) (Cupriavidus necator (strain JMP 134)) protein is 4-hydroxythreonine-4-phosphate dehydrogenase.